A 230-amino-acid polypeptide reads, in one-letter code: DNA mismatch repair protein MutH (230 aa).

The protein belongs to the MutH family.

The protein resides in the cytoplasm. Functionally, sequence-specific endonuclease that cleaves unmethylated GATC sequences. It is involved in DNA mismatch repair. The sequence is that of DNA mismatch repair protein MutH from Enterobacter sp. (strain 638).